The sequence spans 236 residues: DCN1-like protein 5 (236 aa).

Phosphoserine occurs at positions 9, 40, and 47. Positions 45 to 231 constitute a DCUN1 domain; the sequence is FSSKKCLAWF…LLDEFVEWHK (187 aa).

As to quaternary structure, part of a complex that contains DCUN1D5, CUL1 and RBX1; this interaction is bridged by CUL1. Interacts (via the DCUN1 domain) with the unneddylated cullins: interacts with CUL1, CUL2, CUL3, CUL4A, CUL4B and CUL5; these interactions promote the cullin neddylation and the identity of the cullin dictates the affinity of the interaction. Interacts (via DCUN1 domain) with UBE2M (N-terminally acetylated form) and probably with UBE2F (N-terminally acetylated form). May also interact with regulators or subunits of cullin-RING ligases such as RBX1, RNF7, ELOB and DDB1; these interactions are bridged by cullins. Interacts with CAND1; this interaction is bridged by cullins and strongly inhibits the neddylation of cullins. These CAND-cullin-DCNL complexes can only be neddylated in the presence of a substrate adapter. Post-translationally, phosphorylation at Ser-40 is independent of cullin's interaction. Phosphorylated in response to both TICAM1 and MYD88 dependent Toll-like receptor (TLR) pathway activation. Phosphorylated in response to IL1B stimulation.

The protein localises to the nucleus. It localises to the cytoplasm. The protein resides in the cytoskeleton. It is found in the spindle. Functionally, contributes to the neddylation of all cullins by transferring NEDD8 from N-terminally acetylated NEDD8-conjugating E2s enzyme to different cullin C-terminal domain-RBX complexes which is necessary for the activation of cullin-RING E3 ubiquitin ligases (CRLs). May play a role in DNA damage response and may participate in cell proliferation and anchorage-independent cell growth. The sequence is that of DCN1-like protein 5 (DCUN1D5) from Bos taurus (Bovine).